Here is a 325-residue protein sequence, read N- to C-terminus: Beta-ketoacyl-[acyl-carrier-protein] synthase III (325 aa).

Catalysis depends on residues Cys-112 and His-250. Residues 251–255 (QANSR) form an ACP-binding region. Asn-280 is a catalytic residue.

The protein belongs to the thiolase-like superfamily. FabH family. In terms of assembly, homodimer.

The protein resides in the cytoplasm. The catalysed reaction is malonyl-[ACP] + acetyl-CoA + H(+) = 3-oxobutanoyl-[ACP] + CO2 + CoA. The protein operates within lipid metabolism; fatty acid biosynthesis. In terms of biological role, catalyzes the condensation reaction of fatty acid synthesis by the addition to an acyl acceptor of two carbons from malonyl-ACP. Catalyzes the first condensation reaction which initiates fatty acid synthesis and may therefore play a role in governing the total rate of fatty acid production. Possesses both acetoacetyl-ACP synthase and acetyl transacylase activities. Its substrate specificity determines the biosynthesis of branched-chain and/or straight-chain of fatty acids. The chain is Beta-ketoacyl-[acyl-carrier-protein] synthase III from Lactococcus lactis subsp. cremoris (strain SK11).